The following is a 623-amino-acid chain: F-box protein FBX14 (623 aa).

Positions 18–48 (LNLNPPCSSSSSSSSAATFTNKSRNFKSSPP) are disordered. Polar residues predominate over residues 33–45 (AATFTNKSRNFKS). Residues 54–97 (VLENVLENVLQFLTSRCDRNAVSLVCRSWYRVEAQTRLEVFIGN) form the F-box domain. Lys-119 contacts 1D-myo-inositol hexakisphosphate. The interaction with auxin-responsive proteins stretch occupies residues 126–127 (DF). 1D-myo-inositol hexakisphosphate is bound by residues 158–159 (KR) and Arg-391. Residues 394-399 (PFDPRE) form an interaction with auxin-responsive proteins region. 447 to 449 (VFR) contacts 1D-myo-inositol hexakisphosphate. The tract at residues 451–455 (CIMGR) is interaction with auxin-responsive proteins. A 1D-myo-inositol hexakisphosphate-binding site is contributed by Arg-482. Residues 510–511 (AF) are interaction with auxin-responsive proteins. 1D-myo-inositol hexakisphosphate is bound by residues 530-531 (QK) and Arg-555.

Part of a SCF (SKP1-cullin-F-box) protein ligase complex. May interact with auxin and auxin-responsive proteins.

It is found in the nucleus. It participates in protein modification; protein ubiquitination. The sequence is that of F-box protein FBX14 (FBX14) from Arabidopsis thaliana (Mouse-ear cress).